A 436-amino-acid chain; its full sequence is Glutamate-1-semialdehyde 2,1-aminomutase 2 (436 aa).

An N6-(pyridoxal phosphate)lysine modification is found at Lys-271.

Belongs to the class-III pyridoxal-phosphate-dependent aminotransferase family. HemL subfamily. Homodimer. Pyridoxal 5'-phosphate serves as cofactor.

The protein resides in the cytoplasm. It catalyses the reaction (S)-4-amino-5-oxopentanoate = 5-aminolevulinate. The protein operates within porphyrin-containing compound metabolism; protoporphyrin-IX biosynthesis; 5-aminolevulinate from L-glutamyl-tRNA(Glu): step 2/2. This is Glutamate-1-semialdehyde 2,1-aminomutase 2 from Exiguobacterium sibiricum (strain DSM 17290 / CCUG 55495 / CIP 109462 / JCM 13490 / 255-15).